We begin with the raw amino-acid sequence, 188 residues long: MATRKALINVHRIIRSTAVVGRSSIIPAAANRSYPIIFRNGVDLGARFFCENTASAQNFDIDLSNEENKRRTINRLLYRSKQRGFLELDLVLGNWVEENVNSMDENGVKSLIHVLNLENPDLWKWLTEQEQPPEAVSSNPVFSALHEKVMKNLNKHAAPETRAAAGQPWVRGWDDFKRGRDAPISGNQ.

The transit peptide at 1-21 (MATRKALINVHRIIRSTAVVG) directs the protein to the mitochondrion.

The protein belongs to the SDHAF2 family.

Its subcellular location is the mitochondrion. Plays an essential role in the assembly of succinate dehydrogenase (SDH), an enzyme complex (also referred to as respiratory complex II) that is a component of both the tricarboxylic acid (TCA) cycle and the mitochondrial electron transport chain, and which couples the oxidation of succinate to fumarate with the reduction of ubiquinone (coenzyme Q) to ubiquinol. Required for flavinylation (covalent attachment of FAD) of the flavoprotein subunit of the SDH catalytic dimer. The protein is Succinate dehydrogenase assembly factor 2, mitochondrial (SDHAF2) of Arabidopsis thaliana (Mouse-ear cress).